A 376-amino-acid polypeptide reads, in one-letter code: Cell adhesion molecule CEACAM18 (376 aa).

A signal peptide spans 1–30; the sequence is MDFSRPSFSPWRWLTLVASLLTCGICQASG. The Extracellular segment spans residues 31–330; it reads QIFISPDSLL…PLPTVNRELY (300 aa). N-linked (GlcNAc...) asparagine glycosylation is found at asparagine 69, asparagine 95, and asparagine 110. The Ig-like C2-type domain maps to 229 to 314; the sequence is PDYVSLWTQP…TQLTFYRDVT (86 aa). Cysteine 257 and cysteine 298 are oxidised to a cystine. A helical membrane pass occupies residues 331 to 351; sequence IPGPLVIFLILLTSLGGAFVC. Residues 352 to 376 lie on the Cytoplasmic side of the membrane; it reads RVLVYSLFQSCSRGKTCHKCPWQTN.

This sequence belongs to the immunoglobulin superfamily. CEA family. In terms of tissue distribution, mostly expressed in the small and large intestine and at lower levels also in other organs.

Its subcellular location is the membrane. This chain is Cell adhesion molecule CEACAM18, found in Mus musculus (Mouse).